The following is a 174-amino-acid chain: NAD(P)H-quinone oxidoreductase subunit J, chloroplastic (174 aa).

The protein belongs to the complex I 30 kDa subunit family. As to quaternary structure, NDH is composed of at least 16 different subunits, 5 of which are encoded in the nucleus.

Its subcellular location is the plastid. The protein resides in the chloroplast thylakoid membrane. The enzyme catalyses a plastoquinone + NADH + (n+1) H(+)(in) = a plastoquinol + NAD(+) + n H(+)(out). The catalysed reaction is a plastoquinone + NADPH + (n+1) H(+)(in) = a plastoquinol + NADP(+) + n H(+)(out). Functionally, NDH shuttles electrons from NAD(P)H:plastoquinone, via FMN and iron-sulfur (Fe-S) centers, to quinones in the photosynthetic chain and possibly in a chloroplast respiratory chain. The immediate electron acceptor for the enzyme in this species is believed to be plastoquinone. Couples the redox reaction to proton translocation, and thus conserves the redox energy in a proton gradient. In Mesostigma viride (Green alga), this protein is NAD(P)H-quinone oxidoreductase subunit J, chloroplastic.